The chain runs to 417 residues: Phosphoglycerate kinase, cytosolic (417 aa).

(2R)-3-phosphoglycerate-binding residues include V23, D24, F25, N26, R39, S61, H62, G64, R65, R132, H168, and R169. ADP is bound by residues G214 and A215. G214 provides a ligand contact to CDP. Residues A215 and K216 each contribute to the AMP site. A215 lines the ATP pocket. A215 contacts Mg(2+). A (2R)-3-phosphoglycerate-binding site is contributed by K216. D219 is a binding site for CDP. Mg(2+) is bound at residue D219. ADP is bound by residues K220 and G238. An AMP-binding site is contributed by K220. K220 contributes to the ATP binding site. Residue G238 participates in CDP binding. AMP is bound by residues A239 and A311. The ATP site is built by A239 and A311. The ADP site is built by A311 and N335. Residues G336 and F341 each contribute to the CDP site. Residues F341, E342, D374, and S375 each contribute to the ADP site. Residue E342 participates in AMP binding. 3 residues coordinate ATP: E342, D374, and S375. D374 is a Mg(2+) binding site.

It belongs to the phosphoglycerate kinase family. Monomer. It depends on Mg(2+) as a cofactor.

It localises to the cytoplasm. It catalyses the reaction (2R)-3-phosphoglycerate + ATP = (2R)-3-phospho-glyceroyl phosphate + ADP. It participates in carbohydrate degradation; glycolysis; pyruvate from D-glyceraldehyde 3-phosphate: step 2/5. This chain is Phosphoglycerate kinase, cytosolic (PGKB), found in Leishmania major.